We begin with the raw amino-acid sequence, 308 residues long: Probable manganese-dependent inorganic pyrophosphatase (308 aa).

The Mn(2+) site is built by His9, Asp13, Asp15, Asp75, His97, and Asp149.

It belongs to the PPase class C family. It depends on Mn(2+) as a cofactor.

The protein localises to the cytoplasm. It catalyses the reaction diphosphate + H2O = 2 phosphate + H(+). This is Probable manganese-dependent inorganic pyrophosphatase from Enterococcus faecalis (strain ATCC 700802 / V583).